The following is a 239-amino-acid chain: Derlin-2 (239 aa).

At 1–57 the chain is on the cytoplasmic side; that stretch reads MAYQSLRLEYLQIPPVSRAYTTACVLTTAAVQLELITPFQLYFNPELIFKHFQIWRL. Residues 58–78 traverse the membrane as a helical segment; it reads ITNFLFFGPVGFNFLFNMIFL. Over 79 to 96 the chain is Lumenal; sequence YRYCRMLEEGSFRGRTAD. The chain crosses the membrane as a helical span at residues 97 to 117; it reads FVFMFLFGGFLMTLFGLFVSL. The Cytoplasmic portion of the chain corresponds to 118 to 150; it reads VFLGQAFTIMLVYVWSRRNPYVRMNFFGLLNFQ. A helical membrane pass occupies residues 151-171; sequence APFLPWVLMGFSLLLGNSIIV. Residue Asp172 is a topological domain, lumenal. Residues 173 to 193 traverse the membrane as a helical segment; it reads LLGIAVGHIYFFLEDIFPNQP. Over 194–239 the chain is Cytoplasmic; it reads GGIRILKTPSILRTIFDTPDEDPNYNPLPEERPGGFAWGEGQRLGG. Residues 214 to 239 form a disordered region; that stretch reads EDPNYNPLPEERPGGFAWGEGQRLGG. Positions 229 to 239 are enriched in gly residues; that stretch reads FAWGEGQRLGG.

Belongs to the derlin family. In terms of assembly, forms homo- and heterooligomers with DERL3 and, to a lesser extent, with DERL1. Interacts with the SEL1L/SYVN1 and VCP/SELENOS protein complexes. Mediates association between VCP and EDEM1, as well as that between VCP and the misfolded glycoproteins. Interacts with OS9. Interacts with SELENOK and SELENOS. Interacts with the signal recognition particle/SRP and the SRP receptor; in the process of endoplasmic reticulum stress-induced pre-emptive quality control. Interacts with CCDC47. Widely expressed, with lowest levels in brain and heart.

It is found in the endoplasmic reticulum membrane. Functional component of endoplasmic reticulum-associated degradation (ERAD) for misfolded lumenal glycoproteins, but not that of misfolded nonglycoproteins. May act by forming a channel that allows the retrotranslocation of misfolded glycoproteins into the cytosol where they are ubiquitinated and degraded by the proteasome. May mediate the interaction between VCP and misfolded glycoproteins. May also be involved in endoplasmic reticulum stress-induced pre-emptive quality control, a mechanism that selectively attenuates the translocation of newly synthesized proteins into the endoplasmic reticulum and reroutes them to the cytosol for proteasomal degradation. This is Derlin-2 from Mus musculus (Mouse).